A 215-amino-acid chain; its full sequence is Cytochrome b6 (215 aa).

A helical transmembrane segment spans residues 32–52 (IFYCLGGITLTCFLVQVATGF). Residue Cys35 participates in heme c binding. Heme b-binding residues include His86 and His100. Transmembrane regions (helical) follow at residues 90–110 (ASMMVLMMILHIFRVYLTGGF), 116–136 (LTWVTGVILAVLTVSFGVTGY), and 186–206 (LHTFVLPLLTAIFMLMHFLMI). Positions 187 and 202 each coordinate heme b.

It belongs to the cytochrome b family. PetB subfamily. As to quaternary structure, the 4 large subunits of the cytochrome b6-f complex are cytochrome b6, subunit IV (17 kDa polypeptide, PetD), cytochrome f and the Rieske protein, while the 4 small subunits are PetG, PetL, PetM and PetN. The complex functions as a dimer. Heme b is required as a cofactor. The cofactor is heme c.

The protein resides in the plastid. It localises to the chloroplast thylakoid membrane. Its function is as follows. Component of the cytochrome b6-f complex, which mediates electron transfer between photosystem II (PSII) and photosystem I (PSI), cyclic electron flow around PSI, and state transitions. In Marchantia polymorpha (Common liverwort), this protein is Cytochrome b6.